A 510-amino-acid polypeptide reads, in one-letter code: NAD(P)H-quinone oxidoreductase subunit 2 A, chloroplastic (510 aa).

Helical transmembrane passes span 24-44 (LLLF…GLIL), 57-77 (IPWL…ALLF), 99-119 (IFQF…VEYI), 124-144 (MAIT…MFLC), 149-169 (LITI…LSGY), 183-203 (YLLM…WLYG), 227-247 (PGIS…LSPA), 295-315 (WHLL…LIAI), 323-343 (MLAY…IVGD), 354-374 (YMLF…SFGL), 395-415 (ALSL…AGFF), 418-438 (LHLF…IGLL), and 484-504 (MIVC…IIAI).

The protein belongs to the complex I subunit 2 family. In terms of assembly, NDH is composed of at least 16 different subunits, 5 of which are encoded in the nucleus.

The protein resides in the plastid. The protein localises to the chloroplast thylakoid membrane. The enzyme catalyses a plastoquinone + NADH + (n+1) H(+)(in) = a plastoquinol + NAD(+) + n H(+)(out). The catalysed reaction is a plastoquinone + NADPH + (n+1) H(+)(in) = a plastoquinol + NADP(+) + n H(+)(out). Its function is as follows. NDH shuttles electrons from NAD(P)H:plastoquinone, via FMN and iron-sulfur (Fe-S) centers, to quinones in the photosynthetic chain and possibly in a chloroplast respiratory chain. The immediate electron acceptor for the enzyme in this species is believed to be plastoquinone. Couples the redox reaction to proton translocation, and thus conserves the redox energy in a proton gradient. This chain is NAD(P)H-quinone oxidoreductase subunit 2 A, chloroplastic, found in Vitis vinifera (Grape).